Here is a 204-residue protein sequence, read N- to C-terminus: Somatotropin (204 aa).

The N-terminal stretch at 1–17 is a signal peptide; that stretch reads MDRVVLMLSVLSLGVSS. Gln18 is modified (pyrrolidone carboxylic acid). His36 is a Zn(2+) binding site. Cysteines 69 and 177 form a disulfide. Position 186 (Glu186) interacts with Zn(2+). A disulfide bridge links Cys194 with Cys202.

Belongs to the somatotropin/prolactin family.

The protein resides in the secreted. In terms of biological role, growth hormone plays an important role in growth control and is involved in the regulation of several anabolic processes. Implicated as an osmoregulatory substance important for seawater adaptation. This Acanthopagrus latus (Yellowfin seabream) protein is Somatotropin (gh).